A 480-amino-acid chain; its full sequence is MSETTPHWLTKRADLSPDKKAIEFEDGSSITYLELFHRSQSYARKLGKLGFRQGDHIAILSTNCAEMIQIIYACSYLGAVAVLLNTKLTINELNQQLLDSDAKVIITSESFKASEFVLQRMDYNELESVTEDTSIITLKSEIYFDDIFTMMYTSGTTGFPKAVQQTFGNHWWSATSSALNLGLHDNDKWLIPLPLFHVSGLSTMLKSVIYGMPIYVLEKFEVEKVHNAIMDRKVTIVSVVTVMVQRLIKRLGNHHYPNDFRCMLLGGGPAPKSLLEQAKLKNIPVFQSYGMTETSSQIVTLTPEDALKKIGSAGKPLFPAQLKIAHNENNPNQIGEILVKGPMVTKGYYKRAETNKEVFENNWLHTGDMGYLDEQGYLYVVDRRNDLIISGGENIYPSEIENVLVQIEGIEEAGVKGSPNEEWGMVPIAFIVCSRPISENEIAAHLEKYLAKYKRPKEIHVVNELPRNAANKLVRHNLGK.

Belongs to the ATP-dependent AMP-binding enzyme family. MenE subfamily.

The enzyme catalyses 2-succinylbenzoate + ATP + CoA = 2-succinylbenzoyl-CoA + AMP + diphosphate. It participates in quinol/quinone metabolism; 1,4-dihydroxy-2-naphthoate biosynthesis; 1,4-dihydroxy-2-naphthoate from chorismate: step 5/7. The protein operates within quinol/quinone metabolism; menaquinone biosynthesis. Converts 2-succinylbenzoate (OSB) to 2-succinylbenzoyl-CoA (OSB-CoA). This is 2-succinylbenzoate--CoA ligase from Oceanobacillus iheyensis (strain DSM 14371 / CIP 107618 / JCM 11309 / KCTC 3954 / HTE831).